Consider the following 244-residue polypeptide: 14-3-3 protein beta/alpha-1 (244 aa).

Met1 carries the post-translational modification N-acetylmethionine.

This sequence belongs to the 14-3-3 family. As to quaternary structure, homodimer, and heterodimer with other family members. In terms of tissue distribution, expressed in brain, gill, heart, intestine, kidney, liver, ovary, skin, spleen and testis.

The protein localises to the cytoplasm. Adapter protein implicated in the regulation of a large spectrum of both general and specialized signaling pathways. Binds to a large number of partners, usually by recognition of a phosphoserine or phosphothreonine motif. Binding generally results in the modulation of the activity of the binding partner. The protein is 14-3-3 protein beta/alpha-1 of Oncorhynchus mykiss (Rainbow trout).